The sequence spans 291 residues: Small ribosomal subunit protein uS3 (291 aa).

The 72-residue stretch at 39–110 (IRLEIMKFLK…KISIKIKEVK (72 aa)) folds into the KH type-2 domain.

This sequence belongs to the universal ribosomal protein uS3 family. In terms of assembly, part of the 30S ribosomal subunit. Forms a tight complex with proteins S10 and S14.

In terms of biological role, binds the lower part of the 30S subunit head. Binds mRNA in the 70S ribosome, positioning it for translation. This is Small ribosomal subunit protein uS3 from Borreliella afzelii (strain PKo) (Borrelia afzelii).